Consider the following 419-residue polypeptide: O-methyltransferase gsfB (419 aa).

S-adenosyl-L-methionine is bound by residues 255-256 (GG), aspartate 278, 300-301 (DF), and arginine 316. Histidine 320 (proton acceptor) is an active-site residue.

The protein belongs to the class I-like SAM-binding methyltransferase superfamily. Cation-independent O-methyltransferase family.

The catalysed reaction is 2-(2,4-dihydroxy-6-oxidobenzoyl)-5-hydroxy-3-methylbenzenolate + S-adenosyl-L-methionine = griseophenone D + S-adenosyl-L-homocysteine + H(+). The protein operates within secondary metabolite biosynthesis; terpenoid biosynthesis. In terms of biological role, O-methyltransferase; part of the gene cluster that mediates the biosynthesis of griseofulvin, an important antifungal drug that has been in use for a long time for treating dermatophyte infections. The first step of the pathway is the formation of the heptaketide backbone by gsfA which is initiated by priming with acetyl-CoA, followed by sequential condensations of 6 malonyl-CoA units. The resulting benzophenone can undergo a spontaneous dehydration to form norlichexanthone. However, the true precursor for the griseofulvin biosynthesis is not norlichexanthone, but the heptaketide benzophenone that is O-methylated at 3-OH by gsfB to produce griseophenone D which is further methylated at 9-OH by gsfC to yield griseophenone C. Griseophenone C is then substrate of halogenase gsfI which is responsible for the regio-specific chlorination at the C13 position to form griseophenone B. The cytochrome P450 gsfF catalyzes the coupling of orcinol and phloroglucinol rings in griseophenone B to form desmethyl-dehydrogriseofulvin A which is further methylated at 5-OH by gsfD to yield dehydrogriseofulvin. Finally, gsfE performs stereospecific reduction of enone 18 of dehydrogriseofulvin to afford the final product griseofulvin. In Penicillium aethiopicum, this protein is O-methyltransferase gsfB.